A 123-amino-acid chain; its full sequence is Large ribosomal subunit protein bL12 (123 aa).

This sequence belongs to the bacterial ribosomal protein bL12 family. Homodimer. Part of the ribosomal stalk of the 50S ribosomal subunit. Forms a multimeric L10(L12)X complex, where L10 forms an elongated spine to which 2 to 4 L12 dimers bind in a sequential fashion. Binds GTP-bound translation factors.

In terms of biological role, forms part of the ribosomal stalk which helps the ribosome interact with GTP-bound translation factors. Is thus essential for accurate translation. This is Large ribosomal subunit protein bL12 from Dechloromonas aromatica (strain RCB).